Reading from the N-terminus, the 743-residue chain is Phosphoribosylformylglycinamidine synthase subunit PurL (743 aa).

Histidine 50 is an active-site residue. Residues tyrosine 53 and lysine 92 each contribute to the ATP site. Residue glutamate 94 coordinates Mg(2+). Residues 95 to 98 (SHNH) and arginine 117 contribute to the substrate site. Histidine 96 functions as the Proton acceptor in the catalytic mechanism. Residue aspartate 118 participates in Mg(2+) binding. Position 241 (glutamine 241) interacts with substrate. Aspartate 269 provides a ligand contact to Mg(2+). 313–315 (ESQ) serves as a coordination point for substrate. ATP-binding residues include aspartate 495 and glycine 532. Position 533 (asparagine 533) interacts with Mg(2+). Serine 535 is a binding site for substrate.

Belongs to the FGAMS family. As to quaternary structure, monomer. Part of the FGAM synthase complex composed of 1 PurL, 1 PurQ and 2 PurS subunits.

Its subcellular location is the cytoplasm. The enzyme catalyses N(2)-formyl-N(1)-(5-phospho-beta-D-ribosyl)glycinamide + L-glutamine + ATP + H2O = 2-formamido-N(1)-(5-O-phospho-beta-D-ribosyl)acetamidine + L-glutamate + ADP + phosphate + H(+). It functions in the pathway purine metabolism; IMP biosynthesis via de novo pathway; 5-amino-1-(5-phospho-D-ribosyl)imidazole from N(2)-formyl-N(1)-(5-phospho-D-ribosyl)glycinamide: step 1/2. In terms of biological role, part of the phosphoribosylformylglycinamidine synthase complex involved in the purines biosynthetic pathway. Catalyzes the ATP-dependent conversion of formylglycinamide ribonucleotide (FGAR) and glutamine to yield formylglycinamidine ribonucleotide (FGAM) and glutamate. The FGAM synthase complex is composed of three subunits. PurQ produces an ammonia molecule by converting glutamine to glutamate. PurL transfers the ammonia molecule to FGAR to form FGAM in an ATP-dependent manner. PurS interacts with PurQ and PurL and is thought to assist in the transfer of the ammonia molecule from PurQ to PurL. The protein is Phosphoribosylformylglycinamidine synthase subunit PurL of Rhizobium etli (strain CIAT 652).